A 405-amino-acid chain; its full sequence is Acetate kinase (405 aa).

Asn13 lines the Mg(2+) pocket. Lys20 serves as a coordination point for ATP. Arg94 provides a ligand contact to substrate. Asp153 functions as the Proton donor/acceptor in the catalytic mechanism. Residues 213-217 (HLGNG), 288-290 (DFR), and 336-340 (GIGEN) contribute to the ATP site. Glu390 contacts Mg(2+).

It belongs to the acetokinase family. Homodimer. The cofactor is Mg(2+). It depends on Mn(2+) as a cofactor.

The protein localises to the cytoplasm. It catalyses the reaction acetate + ATP = acetyl phosphate + ADP. Its pathway is metabolic intermediate biosynthesis; acetyl-CoA biosynthesis; acetyl-CoA from acetate: step 1/2. Functionally, catalyzes the formation of acetyl phosphate from acetate and ATP. Can also catalyze the reverse reaction. The protein is Acetate kinase of Buchnera aphidicola subsp. Acyrthosiphon pisum (strain APS) (Acyrthosiphon pisum symbiotic bacterium).